The primary structure comprises 364 residues: SVP1-like protein 2 (364 aa).

2 WD repeats span residues 173–213 (AHDS…KICE) and 218–257 (YQHT…NTIR).

Belongs to the WD repeat PROPPIN family.

Its subcellular location is the vacuole membrane. It is found in the cytoplasmic vesicle membrane. The protein resides in the preautophagosomal structure membrane. Functionally, involved in mitochondrial or peroxisomal functions and amino acid signaling pathways. The protein is SVP1-like protein 2 (hsv2) of Schizosaccharomyces pombe (strain 972 / ATCC 24843) (Fission yeast).